A 396-amino-acid chain; its full sequence is MPFRTLDTADLAGKRALVRVDFNVPVDGGKITDDTRLRAALPTIRYLSSKGAKVVLLAHFDRPKGKVVPEMSLAFVAEPLSKLLEQPVAFAADCVGPQARAVVDALENGGVALFENVRFHAGEEKNDADFAAQLAENGDLYVNDAFSAAHRAHASTEALARILPSYPGLAMQRELDALDAALGNPKKPVLGIVGGSKVSTKLDLLRNLVTKLDYLAIGGGMANTFLHAAKIDVGASLCEADMADTALQIIDLAAAAGCKLLLPTDVVVAHEVKPGVAAYTRNVYEVQPEDRILDAGPDTVATLLAAMDASQTLIWNGPLGVFEVPPFDEATVSAAKHAAKLAKSGKIVAVAGGGDTVAALNHAGVSGDFTFVSTAGGAFLEWMEGKTLPGVSALEV.

Substrate contacts are provided by residues 21 to 23 (DFN), R36, 59 to 62 (HFDR), R118, and R151. Residues K201, E323, and 353–356 (GGDT) contribute to the ATP site.

It belongs to the phosphoglycerate kinase family. Monomer.

The protein localises to the cytoplasm. It catalyses the reaction (2R)-3-phosphoglycerate + ATP = (2R)-3-phospho-glyceroyl phosphate + ADP. Its pathway is carbohydrate degradation; glycolysis; pyruvate from D-glyceraldehyde 3-phosphate: step 2/5. The chain is Phosphoglycerate kinase from Caulobacter sp. (strain K31).